The sequence spans 258 residues: Peptidase inhibitor 15 (258 aa).

An N-terminal signal peptide occupies residues 1–21 (MTIIAAISCVFLFSILCETSA). Positions 22–60 (LVLPNSTDLLLSNNNFTDIETALAAHLDSAKIPKARRKR) are excised as a propeptide. N-linked (GlcNAc...) asparagine glycosylation is found at asparagine 26, asparagine 36, and asparagine 124. The region spanning 71–211 (LDYHNQVRGK…RRAVYLVCNY (141 aa)) is the SCP domain.

Belongs to the CRISP family.

It is found in the secreted. In terms of biological role, serine protease inhibitor which displays weak inhibitory activity against trypsin. May play a role in facial patterning during embryonic development. This is Peptidase inhibitor 15 (PI15) from Gallus gallus (Chicken).